The following is a 397-amino-acid chain: Chorismate synthase (397 aa).

NADP(+) is bound by residues Arg-40 and Arg-46. FMN-binding positions include 129-131 (RAS), 257-258 (QA), Gly-302, 317-321 (KPIAT), and Arg-343.

This sequence belongs to the chorismate synthase family. In terms of assembly, homotetramer. FMNH2 is required as a cofactor.

It catalyses the reaction 5-O-(1-carboxyvinyl)-3-phosphoshikimate = chorismate + phosphate. Its pathway is metabolic intermediate biosynthesis; chorismate biosynthesis; chorismate from D-erythrose 4-phosphate and phosphoenolpyruvate: step 7/7. In terms of biological role, catalyzes the anti-1,4-elimination of the C-3 phosphate and the C-6 proR hydrogen from 5-enolpyruvylshikimate-3-phosphate (EPSP) to yield chorismate, which is the branch point compound that serves as the starting substrate for the three terminal pathways of aromatic amino acid biosynthesis. This reaction introduces a second double bond into the aromatic ring system. In Chlorobium phaeobacteroides (strain BS1), this protein is Chorismate synthase.